The sequence spans 293 residues: Nucleotide-binding protein BBR47_52620 (293 aa).

17-24 is an ATP binding site; that stretch reads GMSGAGKT. Residue 68–71 coordinates GTP; that stretch reads DLRG.

The protein belongs to the RapZ-like family.

Displays ATPase and GTPase activities. This Brevibacillus brevis (strain 47 / JCM 6285 / NBRC 100599) protein is Nucleotide-binding protein BBR47_52620.